The chain runs to 375 residues: 23S rRNA (uracil(747)-C(5))-methyltransferase RlmC (375 aa).

4 residues coordinate [4Fe-4S] cluster: cysteine 3, cysteine 11, cysteine 14, and cysteine 87. Glutamine 212, phenylalanine 241, glutamate 262, and asparagine 307 together coordinate S-adenosyl-L-methionine. The active-site Nucleophile is cysteine 334.

Belongs to the class I-like SAM-binding methyltransferase superfamily. RNA M5U methyltransferase family. RlmC subfamily.

It catalyses the reaction uridine(747) in 23S rRNA + S-adenosyl-L-methionine = 5-methyluridine(747) in 23S rRNA + S-adenosyl-L-homocysteine + H(+). Functionally, catalyzes the formation of 5-methyl-uridine at position 747 (m5U747) in 23S rRNA. The chain is 23S rRNA (uracil(747)-C(5))-methyltransferase RlmC from Escherichia coli O17:K52:H18 (strain UMN026 / ExPEC).